A 561-amino-acid chain; its full sequence is MQIQSFYHSASLKTQEAFKSLQKTLYNGMQILSGQGKAPAKAPDARPEIIVLREPGATWGNYLQHQKASNHSLHNLYNLQRDLLTVAATVLGKQDPVLTSMANQMELAKVKADRPATKQEEAAAKALKKNLIELIAARTQQQDGLPAKEAHRFAAVAFRDAQVKQLNNQPWQTIKNTLTHNGHHYTNTQLPAAEMKIGAKDIFPSAYEGKGVCSWDTKNIHHANNLWMSTVSVHEDGKDKTLFCGIRHGVLSPYHEKDPLLRHVGAENKAKEVLTAALFSKPELLNKALAGEAVSLKLVSVGLLTASNIFGKEGTMVEDQMRAWQSLTQPGKMIHLKIRNKDGDLQTVKIKPDVAAFNVGVNELALKLGFGLKASDSYNAEALHQLLGNDLRPEARPGGWVGEWLAQYPDNYEVVNTLARQIKDIWKNNQHHKDGGEPYKLAQRLAMLAHEIDAVPAWNCKSGKDRTGMMDSEIKREIISLHQTHMLSAPGSLPDSGGQKIFQKVLLNSGNLEIQKQNTGGAGNKVMKNLSPEVLNLSYQKRVGDENIWQSVKGISSLITS.

Residue cysteine 460 is part of the active site. The CX5R motif motif lies at 460-466; it reads CKSGKDR.

Belongs to the phosphatase IpgD/SopB family.

The protein localises to the secreted. Converts phosphatidylinositol 3,4,5-trisphosphate (PtdIns 3,4,5-P3) to PtdIns 3-P and prevents the transition of PtdIns 3-P to PtdIns 3,5-P2. It is one of the known effectors injected by Salmonella into the host cell and is required for invasion and for an efficient generation and maintenance of Salmonella-containing vacuole (SVC). Alteration of the phosphoinositide composition of the plasma membrane causes membrane ruffling and actin cytoskeleton rearrangements. The persistence of PtdIns 3-P diverts the SCV from the endocytic pathway resulting in enlarged vesicles, which are essential to create a favorable environment where Salmonella can replicate and avoid immune defenses of the host cell. The chain is Inositol phosphate phosphatase SopB (sopB) from Salmonella typhimurium (strain LT2 / SGSC1412 / ATCC 700720).